A 316-amino-acid polypeptide reads, in one-letter code: DNA-directed RNA polymerase subunit alpha (316 aa).

The alpha N-terminal domain (alpha-NTD) stretch occupies residues Met1 to Glu233. Positions Met245–Asp316 are alpha C-terminal domain (alpha-CTD).

Belongs to the RNA polymerase alpha chain family. In plastids the minimal PEP RNA polymerase catalytic core is composed of four subunits: alpha, beta, beta', and beta''. When a (nuclear-encoded) sigma factor is associated with the core the holoenzyme is formed, which can initiate transcription.

The protein localises to the plastid. Its subcellular location is the chloroplast. The enzyme catalyses RNA(n) + a ribonucleoside 5'-triphosphate = RNA(n+1) + diphosphate. Functionally, DNA-dependent RNA polymerase catalyzes the transcription of DNA into RNA using the four ribonucleoside triphosphates as substrates. In Cyanidioschyzon merolae (strain NIES-3377 / 10D) (Unicellular red alga), this protein is DNA-directed RNA polymerase subunit alpha.